Consider the following 397-residue polypeptide: MIIKPKVRGFICTTTHPVGCEANVRRQIAYTQAKGPIENGPKKVLVIGASTGYGLASRIAAAFGAGAATIGVFFEKPGTETKTGTAGWYNAAAFDKAAKEAGLYAKSVNGDAFSNECRQQVIELIKQDLGQVDLVVYSLASPVRKLPDTGEVVRSALKPIGEVYTTTAIDTNKDQIISASVEPATEEEIQNTITVMGGQDWELWMSALRDAGVLADGAKSVAYSYIGTDLTWPIYWHGTLGRAKEDLDRAAAGIRGDLAAHGGTAHVAVLKSVVTQASSAIPVMPLYISMSFKIMKEKGIHEGCMEQVDRMMRTRLYGSDMALDDHARIRMDDWELRDDVQQTCRDLWPSITSENLSQLTDYSGYKQEFLRLFGFGLDGVDYDADVNPDVQFDVVTL.

Residues 48 to 53 (GASTGY), 74 to 75 (FE), 111 to 112 (DA), and 139 to 140 (LA) contribute to the NAD(+) site. Y225 is a binding site for substrate. The active-site Proton donor is Y235. NAD(+) contacts are provided by residues K244 and 273–275 (VVT).

It belongs to the TER reductase family. Monomer.

The catalysed reaction is a 2,3-saturated acyl-[ACP] + NAD(+) = a (2E)-enoyl-[ACP] + NADH + H(+). It functions in the pathway lipid metabolism; fatty acid biosynthesis. Functionally, involved in the final reduction of the elongation cycle of fatty acid synthesis (FAS II). Catalyzes the reduction of a carbon-carbon double bond in an enoyl moiety that is covalently linked to an acyl carrier protein (ACP). The sequence is that of Enoyl-[acyl-carrier-protein] reductase [NADH] from Edwardsiella ictaluri (strain 93-146).